Consider the following 281-residue polypeptide: ATP synthase gamma chain (281 aa).

Belongs to the ATPase gamma chain family. F-type ATPases have 2 components, CF(1) - the catalytic core - and CF(0) - the membrane proton channel. CF(1) has five subunits: alpha(3), beta(3), gamma(1), delta(1), epsilon(1). CF(0) has three main subunits: a, b and c.

It is found in the cell inner membrane. In terms of biological role, produces ATP from ADP in the presence of a proton gradient across the membrane. The gamma chain is believed to be important in regulating ATPase activity and the flow of protons through the CF(0) complex. In Ehrlichia canis (strain Jake), this protein is ATP synthase gamma chain.